A 1333-amino-acid polypeptide reads, in one-letter code: Aldehyde oxidase 1 (1333 aa).

Positions P4–I91 constitute a 2Fe-2S ferredoxin-type domain. [2Fe-2S] cluster is bound by residues C43, C48, C51, and C73. A Mo-molybdopterin-binding site is contributed by Q112. Positions 113, 116, 148, and 150 each coordinate [2Fe-2S] cluster. C150 provides a ligand contact to Mo-molybdopterin. Positions F235 to K420 constitute an FAD-binding PCMH-type domain. FAD-binding positions include I263–V270, A344, S353, H357, D366, and L410. Mo-molybdopterin is bound by residues A801–F802 and M1042. S1063 bears the Phosphoserine mark. Mo-molybdopterin-binding positions include G1083–V1086, Q1198, and L1263. E1265 (proton acceptor; for azaheterocycle hydroxylase activity) is an active-site residue.

Belongs to the xanthine dehydrogenase family. Homodimer. [2Fe-2S] cluster is required as a cofactor. FAD serves as cofactor. The cofactor is Mo-molybdopterin. In terms of processing, the N-terminus is blocked. As to expression, expression in liver (at protein level). Also detected in heart, lung, spleen and kidney.

It is found in the cytoplasm. The catalysed reaction is an aldehyde + O2 + H2O = a carboxylate + H2O2 + H(+). The enzyme catalyses retinal + O2 + H2O = retinoate + H2O2 + H(+). Its activity is regulated as follows. Inhibited by menadione and isovanillin. Not inhibited by allopurinol, a xanthine dehydrogenase potent inhibitor. Inhibited by the flavonoids quercetin, myricetin and genistein. Nitric oxide generation is inhibited by raloxifene and competitively inhibited by an increase in oxygen levels. In terms of biological role, oxidase with broad substrate specificity, oxidizing aromatic azaheterocycles, such as N1-methylnicotinamide, N-methylphthalazinium and phthalazine, as well as aldehydes, such as benzaldehyde, retinal, pyridoxal, and vanillin. Plays a role in the metabolism of xenobiotics and drugs containing aromatic azaheterocyclic substituents. Participates in the bioactivation of prodrugs such as famciclovir, catalyzing the oxidation step from 6-deoxypenciclovir to penciclovir, which is a potent antiviral agent. Is probably involved in the regulation of reactive oxygen species homeostasis. Is a prominent source of superoxide generation via the one-electron reduction of molecular oxygen. Also catalyzes nitric oxide (NO) production; under anaerobic conditions, reduces nitrite to NO with NADH or aldehyde as electron donor, but under aerobic conditions, NADH is the preferred substrate. These reactions may be catalyzed by several isozymes. May play a role in adipogenesis. The protein is Aldehyde oxidase 1 of Rattus norvegicus (Rat).